We begin with the raw amino-acid sequence, 543 residues long: Glutamyl-tRNA(Gln) amidotransferase subunit A, chloroplastic/mitochondrial (543 aa).

Catalysis depends on charge relay system residues Lys123 and Ser198. Ser222 functions as the Acyl-ester intermediate in the catalytic mechanism.

The protein belongs to the amidase family. GatA subfamily. As to quaternary structure, subunit of the heterotrimeric GatCAB amidotransferase (AdT) complex, composed of A, B and C subunits.

The protein resides in the mitochondrion. The protein localises to the plastid. It is found in the chloroplast stroma. It carries out the reaction L-glutamyl-tRNA(Gln) + L-glutamine + ATP + H2O = L-glutaminyl-tRNA(Gln) + L-glutamate + ADP + phosphate + H(+). Its function is as follows. Allows the formation of correctly charged Gln-tRNA(Gln) through the transamidation of misacylated Glu-tRNA(Gln) in chloroplasts and mitochondria. The reaction takes place in the presence of glutamine and ATP through an activated gamma-phospho-Glu-tRNA(Gln). This Oryza sativa subsp. indica (Rice) protein is Glutamyl-tRNA(Gln) amidotransferase subunit A, chloroplastic/mitochondrial.